We begin with the raw amino-acid sequence, 253 residues long: Putative tyrosine-protein phosphatase OCA1 (253 aa).

Residues 1–21 are compositionally biased toward basic and acidic residues; that stretch reads MHRTSIVEELERHQQDQKADQ. The interval 1-84 is disordered; that stretch reads MHRTSIVEEL…PRMKTIVKPP (84 aa). Polar residues predominate over residues 27–65; the sequence is SDASNSALQESSDPRLSTTDNTNTPEINVNDQQQEQQVA. A Tyrosine-protein phosphatase domain is found at 93-249; the sequence is NFGPVERNLY…IIVYPESAPE (157 aa). The active-site Phosphocysteine intermediate is the cysteine 186.

It belongs to the protein-tyrosine phosphatase family.

It is found in the cytoplasm. The enzyme catalyses O-phospho-L-tyrosyl-[protein] + H2O = L-tyrosyl-[protein] + phosphate. Functionally, putative tyrosine-protein phosphatase required for protection against superoxide stress. The chain is Putative tyrosine-protein phosphatase OCA1 (OCA1) from Yarrowia lipolytica (strain CLIB 122 / E 150) (Yeast).